The following is a 157-amino-acid chain: Class I hydrophobin rodA (157 aa).

A signal peptide spans 1 to 41 (MKFSIAAAVVAFAASVAALPPAHDSQFAGNGVGNKGNSNVK). Asn-47 is a glycosylation site (N-linked (GlcNAc...) asparagine). Intrachain disulfides connect Cys-57–Cys-131, Cys-65–Cys-125, Cys-66–Cys-106, and Cys-132–Cys-150.

This sequence belongs to the fungal hydrophobin family. In terms of assembly, self-assembles to form functional amyloid fibrils called rodlets. Self-assembly into fibrillar rodlets occurs spontaneously at hydrophobic:hydrophilic interfaces and the rodlets further associate laterally to form amphipathic monolayers.

It localises to the secreted. Its subcellular location is the spore wall. Functionally, aerial growth, conidiation, and dispersal of filamentous fungi in the environment rely upon a capability of their secreting small amphipathic proteins called hydrophobins (HPBs) with low sequence identity. Class I can self-assemble into an outermost layer of rodlet bundles on aerial cell surfaces, conferring cellular hydrophobicity that supports fungal growth, development and dispersal; whereas Class II form highly ordered films at water-air interfaces through intermolecular interactions but contribute nothing to the rodlet structure. RodA is a class I hydrophobin that contributes to surface hydrophobicity, which is important for processes such as association of hyphae in reproductive structures, dispersal of aerial spores and adhesion of pathogens to host structures. Important for the formation of hydrophobic rodlet layers of asexually-produced spores. Promotes also biofilm formation and may enhance lignocellulose utilization via promoting a compact substrate-enzyme-fungus structure. The sequence is that of Class I hydrophobin rodA from Emericella nidulans (strain FGSC A4 / ATCC 38163 / CBS 112.46 / NRRL 194 / M139) (Aspergillus nidulans).